The following is a 164-amino-acid chain: Ecotin (164 aa).

Residues 1–20 form the signal peptide; the sequence is MKMFVPAVVFAALASASAWA. A disulfide bond links Cys72 and Cys109.

The protein belongs to the protease inhibitor I11 (ecotin) family. Homodimer.

The protein localises to the periplasm. Functionally, general inhibitor of pancreatic serine proteases: inhibits chymotrypsin, trypsin, elastases, factor X, kallikrein as well as a variety of other proteases. The chain is Ecotin from Salmonella typhi.